Reading from the N-terminus, the 379-residue chain is Stimulator of interferon genes protein (379 aa).

Over 1-23 (MPQDPSTRSSPARLLIPEPRAGR) the chain is Cytoplasmic. Residues 24–40 (ARHAACVLLAVCFVVLF) form a helical membrane-spanning segment. The Lumenal segment spans residues 41-50 (LSGEPLAPII). Residues 51–75 (RSVCTQLAALQLGVLLKGCCCLAEE) traverse the membrane as a helical segment. Residues 76 to 97 (IFHLHSRHHGSLWQVLCSCFPP) lie on the Cytoplasmic side of the membrane. The chain crosses the membrane as a helical span at residues 98–111 (RWYLALLLVGGSAY). Residues 112–121 (LDPPEDNGHS) lie on the Lumenal side of the membrane. Residues 122–139 (PRLALTLSCLCQLLVLAL) form a helical membrane-spanning segment. Topologically, residues 140–379 (GLQKLSAVEV…LPQPLRSDCP (240 aa)) are cytoplasmic. Positions 158 to 345 (KNVAHGLAWS…WHLQQQQREE (188 aa)) are cyclic dinucleotide-binding domain (CBD). Residues Ser167, Tyr172, 243-246 (RVYK), and Ser268 contribute to the 3',3'-c-di-GMP site. 2',3'-cGAMP is bound by residues 167–172 (SYYIGY), 243–246 (RVYK), and Ser268. The short motif at 363 to 366 (LQVS) is the pLxIS motif element. Residue Ser366 is modified to Phosphoserine; by TBK1.

This sequence belongs to the STING family. Homodimer; forms a homodimer in absence of cyclic nucleotide (c-di-GMP or cGAMP). Homotetramer; in presence of cyclic nucleotide (c-di-GMP or cGAMP), forms tetramers and higher-order oligomers through side-by-side packing. Interacts (when phosphorylated) with IRF3; following activation and phosphorylation on the pLxIS motif by TBK1, recruits IRF3. Post-translationally, phosphorylation by TBK1 leads to activation and production of IFN-beta. Following cyclic nucleotide (c-di-GMP or cGAMP)-binding, activation and translocation from the endoplasmic reticulum, STING1 is phosphorylated by TBK1 at Ser-366 in the pLxIS motif. The phosphorylated pLxIS motif constitutes an IRF3-binding motif, leading to recruitment of the transcription factor IRF3 to induce type-I interferons and other cytokines.

The protein localises to the endoplasmic reticulum membrane. Its subcellular location is the cytoplasm. It localises to the perinuclear region. The protein resides in the endoplasmic reticulum-Golgi intermediate compartment membrane. It is found in the golgi apparatus membrane. The protein localises to the cytoplasmic vesicle. Its subcellular location is the autophagosome membrane. It catalyses the reaction H(+)(in) = H(+)(out). In terms of biological role, facilitator of innate immune signaling that acts as a sensor of cytosolic DNA from bacteria and viruses and promotes the production of type I interferon (IFN-alpha and IFN-beta). Innate immune response is triggered in response to non-CpG double-stranded DNA from viruses and bacteria delivered to the cytoplasm. Acts by binding cyclic dinucleotides: recognizes and binds cyclic di-GMP (c-di-GMP), a second messenger produced by bacteria, and cyclic GMP-AMP (cGAMP), a messenger produced by CGAS in response to DNA virus in the cytosol. Upon binding of c-di-GMP or cGAMP, STING1 oligomerizes and is able to activate both NF-kappa-B and IRF3 transcription pathways to induce expression of type I interferon and exert a potent anti-viral state. Exhibits 2',3' phosphodiester linkage-specific ligand recognition: can bind both 2'-3' linked cGAMP and 3'-3' linked cGAMP but is preferentially activated by 2'-3' linked cGAMP. In addition to promote the production of type I interferons, plays a direct role in autophagy. Following cGAMP-binding, STING1 buds from the endoplasmic reticulum into COPII vesicles, which then form the endoplasmic reticulum-Golgi intermediate compartment (ERGIC). The ERGIC serves as the membrane source for LC3 lipidation, leading to formation of autophagosomes that target cytosolic DNA or DNA viruses for degradation by the lysosome. Promotes autophagy by acting as a proton channel that directs proton efflux from the Golgi to facilitate LC3 lipidation. The autophagy- and interferon-inducing activities can be uncoupled and autophagy induction is independent of TBK1 phosphorylation. This chain is Stimulator of interferon genes protein, found in Gallus gallus (Chicken).